The chain runs to 81 residues: Sec-independent protein translocase protein TatA (81 aa).

The chain crosses the membrane as a helical span at residues 1-21; that stretch reads MGMPSGQELLIILAIVVLLFG. The disordered stretch occupies residues 45–81; sequence NEDDDTEVKSASTEAPKKVESAEEVASKESSKTPTQA. Residues 59–75 show a composition bias toward basic and acidic residues; the sequence is APKKVESAEEVASKESS.

It belongs to the TatA/E family. As to quaternary structure, the Tat system comprises two distinct complexes: a TatABC complex, containing multiple copies of TatA, TatB and TatC subunits, and a separate TatA complex, containing only TatA subunits. Substrates initially bind to the TatABC complex, which probably triggers association of the separate TatA complex to form the active translocon.

The protein localises to the cell inner membrane. Part of the twin-arginine translocation (Tat) system that transports large folded proteins containing a characteristic twin-arginine motif in their signal peptide across membranes. TatA could form the protein-conducting channel of the Tat system. This chain is Sec-independent protein translocase protein TatA, found in Sulfurimonas denitrificans (strain ATCC 33889 / DSM 1251) (Thiomicrospira denitrificans (strain ATCC 33889 / DSM 1251)).